Consider the following 401-residue polypeptide: Rab-interacting lysosomal protein (401 aa).

The 91-residue stretch at 11–101 (PGWGSREAAG…REENERLRRE (91 aa)) folds into the RH1 domain. A coiled-coil region spans residues 75 to 181 (DSLQVSAQPA…AQDRERERQQ (107 aa)). Disordered regions lie at residues 167–239 (TQLR…SEAG) and 304–388 (KMLG…SALH). Residues 172–181 (AQDRERERQQ) are compositionally biased toward basic and acidic residues. An RH2 domain is found at 240–316 (QCRFSREEFE…GTPEEAESSE (77 aa)). The necessary for interaction with RAB7A and RAB34, lysosomal distribution and morphology stretch occupies residues 272–333 (FQRELLTDHR…LLSDDKGDHP (62 aa)). Thr308 carries the phosphothreonine modification. A compositionally biased stretch (acidic residues) spans 310–319 (EEAESSEDEA). Phosphoserine is present on residues Ser314 and Ser315.

As to quaternary structure, homodimer. Interacts with RAB7A. Interacts with RAB34. Identified in a complex with MREG and DCTN1; interacts directly with MREG. Interacts with CLN3. Interacts with FLCN; the interaction is direct and promotes association between RILP and RAB34. Ubiquitous. Strongly expressed in fetal heart, heart, stomach, spleen, adrenal gland, thyroid gland, salivary gland, fetal liver, liver and lung. Poorly expressed in brain.

The protein resides in the late endosome membrane. It is found in the lysosome membrane. The protein localises to the cytoplasmic vesicle. Its subcellular location is the phagosome membrane. In terms of biological role, rab effector playing a role in late endocytic transport to degradative compartments. Involved in the regulation of lysosomal morphology and distribution. Induces recruitment of dynein-dynactin motor complexes to Rab7A-containing late endosome and lysosome compartments. Promotes centripetal migration of phagosomes and the fusion of phagosomes with the late endosomes and lysosomes. This Homo sapiens (Human) protein is Rab-interacting lysosomal protein (RILP).